The primary structure comprises 409 residues: D-galactonate dehydratase family member Achl_0790 (409 aa).

Position 217 (D217) interacts with Mg(2+). A D-arabinonate-binding site is contributed by H219. Mg(2+) is bound by residues E243 and E269. Positions 269, 290, 319, and 346 each coordinate D-arabinonate.

The protein belongs to the mandelate racemase/muconate lactonizing enzyme family. GalD subfamily.

Its function is as follows. Has no detectable activity with D-mannonate and with a panel of 70 other acid sugars (in vitro), in spite of the conservation of the residues that are expected to be important for catalytic activity and cofactor binding. May have evolved a divergent function. The sequence is that of D-galactonate dehydratase family member Achl_0790 from Pseudarthrobacter chlorophenolicus (strain ATCC 700700 / DSM 12829 / CIP 107037 / JCM 12360 / KCTC 9906 / NCIMB 13794 / A6) (Arthrobacter chlorophenolicus).